The following is a 155-amino-acid chain: Small ribosomal subunit protein uS7c (155 aa).

This sequence belongs to the universal ribosomal protein uS7 family. As to quaternary structure, part of the 30S ribosomal subunit.

Its subcellular location is the plastid. The protein localises to the chloroplast. Its function is as follows. One of the primary rRNA binding proteins, it binds directly to 16S rRNA where it nucleates assembly of the head domain of the 30S subunit. In Schisandra chinensis (Chinese magnolia vine), this protein is Small ribosomal subunit protein uS7c (rps7).